Consider the following 296-residue polypeptide: ATP synthase gamma chain (296 aa).

It belongs to the ATPase gamma chain family. As to quaternary structure, F-type ATPases have 2 components, CF(1) - the catalytic core - and CF(0) - the membrane proton channel. CF(1) has five subunits: alpha(3), beta(3), gamma(1), delta(1), epsilon(1). CF(0) has three main subunits: a, b and c.

Its subcellular location is the cell inner membrane. Its function is as follows. Produces ATP from ADP in the presence of a proton gradient across the membrane. The gamma chain is believed to be important in regulating ATPase activity and the flow of protons through the CF(0) complex. This is ATP synthase gamma chain from Gluconobacter oxydans (strain 621H) (Gluconobacter suboxydans).